Reading from the N-terminus, the 532-residue chain is Cytokinin dehydrogenase 8 (532 aa).

An N-terminal signal peptide occupies residues 1–26 (MELKAMYLYAAVLAVLLCSSVNFIQS). Positions 51–238 (VSDAPFAVMR…TRARIPLQLA (188 aa)) constitute an FAD-binding PCMH-type domain. Residues A87, G89, and G91 each contribute to the FAD site. H92 is modified (pros-8alpha-FAD histidine). FAD-binding residues include S93, Q97, D162, T167, S173, I177, and I228. Residue N420 is glycosylated (N-linked (GlcNAc...) asparagine). FAD-binding residues include Y482 and Q520.

Belongs to the oxygen-dependent FAD-linked oxidoreductase family. Monomer. The cofactor is FAD.

It is found in the secreted. It localises to the extracellular space. The enzyme catalyses N(6)-dimethylallyladenine + A + H2O = 3-methyl-2-butenal + adenine + AH2. In terms of biological role, catalyzes the oxidation of cytokinins, a family of N(6)-substituted adenine derivatives that are plant hormones, where the substituent is an isopentenyl group. The sequence is that of Cytokinin dehydrogenase 8 (CKX8) from Oryza sativa subsp. indica (Rice).